The chain runs to 360 residues: Thiol protease SEN102 (360 aa).

The signal sequence occupies residues 1–20 (MAKPKFIALALVALSFLSIA). A propeptide spans 21 to 133 (QSIPFTEKDL…ENVGSLPAAS (113 aa)) (activation peptide). 3 cysteine pairs are disulfide-bonded: cysteine 151-cysteine 193, cysteine 185-cysteine 225, and cysteine 283-cysteine 335. The active site involves cysteine 154. Active-site residues include histidine 289 and asparagine 310. Asparagine 353 carries an N-linked (GlcNAc...) asparagine glycan. Residues 357-360 (RDEL) carry the Prevents secretion from ER motif.

The protein belongs to the peptidase C1 family.

The protein resides in the endoplasmic reticulum lumen. The polypeptide is Thiol protease SEN102 (SEN102) (Hemerocallis sp. (Daylily)).